Here is a 392-residue protein sequence, read N- to C-terminus: 8-amino-7-oxononanoate synthase (392 aa).

A substrate-binding site is contributed by Arg19. 106-107 contributes to the pyridoxal 5'-phosphate binding site; it reads GY. Position 131 (His131) interacts with substrate. Pyridoxal 5'-phosphate is bound by residues Ser176, His204, and Thr233. At Lys236 the chain carries N6-(pyridoxal phosphate)lysine. Thr350 contributes to the substrate binding site.

This sequence belongs to the class-II pyridoxal-phosphate-dependent aminotransferase family. BioF subfamily. Homodimer. It depends on pyridoxal 5'-phosphate as a cofactor.

The catalysed reaction is 6-carboxyhexanoyl-[ACP] + L-alanine + H(+) = (8S)-8-amino-7-oxononanoate + holo-[ACP] + CO2. It participates in cofactor biosynthesis; biotin biosynthesis. Catalyzes the decarboxylative condensation of pimeloyl-[acyl-carrier protein] and L-alanine to produce 8-amino-7-oxononanoate (AON), [acyl-carrier protein], and carbon dioxide. This Pseudomonas fluorescens (strain ATCC BAA-477 / NRRL B-23932 / Pf-5) protein is 8-amino-7-oxononanoate synthase.